The primary structure comprises 170 residues: Acireductone dioxygenase (170 aa).

Fe(2+)-binding residues include histidine 99, histidine 101, glutamate 105, and histidine 144. The Ni(2+) site is built by histidine 99, histidine 101, glutamate 105, and histidine 144.

Belongs to the acireductone dioxygenase (ARD) family. In terms of assembly, monomer. Fe(2+) serves as cofactor. The cofactor is Ni(2+).

It carries out the reaction 1,2-dihydroxy-5-(methylsulfanyl)pent-1-en-3-one + O2 = 3-(methylsulfanyl)propanoate + CO + formate + 2 H(+). The enzyme catalyses 1,2-dihydroxy-5-(methylsulfanyl)pent-1-en-3-one + O2 = 4-methylsulfanyl-2-oxobutanoate + formate + 2 H(+). It participates in amino-acid biosynthesis; L-methionine biosynthesis via salvage pathway; L-methionine from S-methyl-5-thio-alpha-D-ribose 1-phosphate: step 5/6. Catalyzes 2 different reactions between oxygen and the acireductone 1,2-dihydroxy-3-keto-5-methylthiopentene (DHK-MTPene) depending upon the metal bound in the active site. Fe-containing acireductone dioxygenase (Fe-ARD) produces formate and 2-keto-4-methylthiobutyrate (KMTB), the alpha-ketoacid precursor of methionine in the methionine recycle pathway. Ni-containing acireductone dioxygenase (Ni-ARD) produces methylthiopropionate, carbon monoxide and formate, and does not lie on the methionine recycle pathway. The sequence is that of Acireductone dioxygenase from Bacillus mycoides (strain KBAB4) (Bacillus weihenstephanensis).